The following is a 242-amino-acid chain: Segregation and condensation protein A (242 aa).

The protein belongs to the ScpA family. Component of a cohesin-like complex composed of ScpA, ScpB and the Smc homodimer, in which ScpA and ScpB bind to the head domain of Smc. The presence of the three proteins is required for the association of the complex with DNA.

The protein resides in the cytoplasm. Its function is as follows. Participates in chromosomal partition during cell division. May act via the formation of a condensin-like complex containing Smc and ScpB that pull DNA away from mid-cell into both cell halves. The polypeptide is Segregation and condensation protein A (Streptococcus pneumoniae serotype 4 (strain ATCC BAA-334 / TIGR4)).